A 745-amino-acid chain; its full sequence is Probable copper-transporting ATPase PacS (745 aa).

Residues 1–94 lie on the Cytoplasmic side of the membrane; sequence MAQTINLQLE…PVFSAKLVTG (94 aa). The HMA domain occupies 3-68; sequence QTINLQLEGM…AVERAGYHAR (66 aa). A metal cation contacts are provided by C14 and C17. A helical membrane pass occupies residues 95-115; that stretch reads LVISAVLFFGSLPMMLGVNIP. Over 116 to 125 the chain is Extracellular; it reads HFPHIFHDPW. Residues 126–145 traverse the membrane as a helical segment; that stretch reads LQWLLATPVQFWSGAEFYRG. Residues 146–152 are Cytoplasmic-facing; that stretch reads AWKSVRT. The helical transmembrane segment at 153-173 threads the bilayer; that stretch reads RSATMDTLVALGTSAAYFYSV. Residues 174-193 lie on the Extracellular side of the membrane; the sequence is AITLFPQWLTSQGLAAHVYF. Residues 194 to 214 traverse the membrane as a helical segment; sequence EAAAVVITLILLGRSLEQRAR. The Cytoplasmic segment spans residues 215–342; it reads RETSAAIRKL…KAPIQHFVDR (128 aa). Residues 343 to 365 traverse the membrane as a helical segment; that stretch reads ITHWFVPTVIVVAIAAFCIWWLT. Over 366–372 the chain is Extracellular; sequence TGNITLA. Residues 373–390 form a helical membrane-spanning segment; the sequence is VLTLVEVLIIACPCALGL. Over 391–543 the chain is Cytoplasmic; the sequence is ATPTSVMVGT…QAQQWEKEQK (153 aa). D428 (4-aspartylphosphate intermediate) is an active-site residue. Residues 544–564 form a helical membrane-spanning segment; sequence TVIWLAVDTEVKALLAIADAI. Residues 565–687 lie on the Extracellular side of the membrane; that stretch reads KPSSPQVVQA…KLSRATMGNI (123 aa). Positions 633 and 637 each coordinate Mg(2+). Residues 688–707 traverse the membrane as a helical segment; that stretch reads RQNLFFAFIYNVIGIPVAAG. The Cytoplasmic segment spans residues 708–719; that stretch reads LFYPLFGLLLNP. The chain crosses the membrane as a helical span at residues 720 to 738; it reads ILAGAAMAFSSVSVVTNAL. Residues 739–745 lie on the Extracellular side of the membrane; the sequence is RLKKFCP.

This sequence belongs to the cation transport ATPase (P-type) (TC 3.A.3) family. Type IB subfamily.

It is found in the cell membrane. It catalyses the reaction Cu(+)(in) + ATP + H2O = Cu(+)(out) + ADP + phosphate + H(+). May play a role in the osmotic adaptation. This chain is Probable copper-transporting ATPase PacS (pacS), found in Synechocystis sp. (strain ATCC 27184 / PCC 6803 / Kazusa).